Here is a 221-residue protein sequence, read N- to C-terminus: Glutathione peroxidase 6 (221 aa).

An N-terminal signal peptide occupies residues 1-19 (MAQKLWGSCLFSLFMAALA). The active site involves Cys73.

Belongs to the glutathione peroxidase family.

The protein resides in the secreted. It catalyses the reaction 2 glutathione + H2O2 = glutathione disulfide + 2 H2O. The sequence is that of Glutathione peroxidase 6 (Gpx6) from Mus musculus (Mouse).